The sequence spans 233 residues: DNA repair protein RecO (233 aa).

The protein belongs to the RecO family.

Functionally, involved in DNA repair and RecF pathway recombination. The chain is DNA repair protein RecO from Pseudomonas aeruginosa (strain UCBPP-PA14).